Here is a 1312-residue protein sequence, read N- to C-terminus: Cyclic GMP-binding protein D (1312 aa).

Residues 26-155 (GFSAIKSCSL…EFFKAKKMAR (130 aa)) enclose the N-terminal Ras-GEF domain. Composition is skewed to low complexity over residues 206-236 (NTMN…SSPN) and 275-296 (NGTS…LFNQ). Disordered stretches follow at residues 206–244 (NTMN…RSSM) and 260–326 (NFNN…NNVN). The segment covering 297–310 (QPSLSMLNDDGSVQ) has biased composition (polar residues). Residues 311–326 (NNNNNNNNNNNNNNVN) are compositionally biased toward low complexity. The Ras-GEF domain occupies 353–582 (LPEAIAKELT…FRLSKIREET (230 aa)). The tract at residues 586 to 658 (QSLKESNGIG…NCGNGSGISS (73 aa)) is disordered. Over residues 591–612 (SNGIGNSNSTSGGSSSSLVNKD) the composition is skewed to low complexity. Gly residues predominate over residues 613 to 625 (GSGGGGGSGGGGS). Positions 630-644 (GDGKGDGKDNRDGRG) are enriched in basic and acidic residues. Positions 646–657 (GNSNCGNGSGIS) are enriched in low complexity. A nucleoside 3',5'-cyclic phosphate is bound at residue 698–857 (VSSTLSEREW…ATFYKFIGVI (160 aa)). The region spanning 940-1006 (SSFRTKFGLS…DKILTVDKNI (67 aa)) is the GRAM domain. Positions 1059–1087 (QQQQPSQQPSQQQSQSSQLQQSVSASSTT) are enriched in low complexity. Disordered regions lie at residues 1059-1108 (QQQQ…IKDL) and 1167-1210 (NNIN…NSSI). A nucleoside 3',5'-cyclic phosphate contacts are provided by residues 1105-1218 (IKDL…SNTS) and 1182-1303 (NNNN…LACV).

Its function is as follows. Promotes the exchange of Ras-bound GDP by GTP. Induces the formation of substrate-attached pseudopodia, that leads to increased adhesion and thereby negatively influencing cell speed and polarity. This Dictyostelium discoideum (Social amoeba) protein is Cyclic GMP-binding protein D (gbpD).